The chain runs to 146 residues: Globin (146 aa).

Ala1 is subject to N-acetylalanine. The 146-residue stretch at 1–146 (ALTEPQKTAL…LLTMLIKAHS (146 aa)) folds into the Globin domain. Positions 65 and 97 each coordinate heme b.

This sequence belongs to the globin family. In terms of assembly, homodimer.

This Buccinum undatum (Common whelk) protein is Globin.